Consider the following 330-residue polypeptide: Ribosomal RNA small subunit methyltransferase H (330 aa).

S-adenosyl-L-methionine-binding positions include 40-42 (GGY), Asp-58, Phe-85, Asp-101, and Gln-108.

Belongs to the methyltransferase superfamily. RsmH family.

The protein localises to the cytoplasm. The enzyme catalyses cytidine(1402) in 16S rRNA + S-adenosyl-L-methionine = N(4)-methylcytidine(1402) in 16S rRNA + S-adenosyl-L-homocysteine + H(+). In terms of biological role, specifically methylates the N4 position of cytidine in position 1402 (C1402) of 16S rRNA. This Roseobacter denitrificans (strain ATCC 33942 / OCh 114) (Erythrobacter sp. (strain OCh 114)) protein is Ribosomal RNA small subunit methyltransferase H.